The chain runs to 574 residues: Egalitarian protein homolog (574 aa).

Residues 259–278 (LNEDGSENGSDEGEETNNNG) are disordered. Residues 262–273 (DGSENGSDEGEE) show a composition bias toward acidic residues. Positions 312–414 (NMEKKVVGLD…SLLQHEKFNK (103 aa)) constitute a 3'-5' exonuclease domain.

Component of a dynein-regulating complex composed of at least bicd-1, dlc-1 and egal-1.

It localises to the nucleus envelope. In terms of biological role, part of a complex with bicd-1 and dlc-1, which is recruited to the nuclear envelope by unc-83, where in turn, it recruits dynein to the nuclear surface and regulates nuclear migration in hypodermal precursor cells. The sequence is that of Egalitarian protein homolog from Caenorhabditis elegans.